Reading from the N-terminus, the 311-residue chain is MSRHKSKKLIIEDDEPKQDELNPFSFKEFIRNKNQPSCSTEATEVYNGACLVEQDYNTSIDFATKGPFFTDPSALCQPPESEPDETWIESHQRSAIEGSPDFELCGASDISAYSEQSSLCSDEREAAEWELGQSDFLPKKHLSRISTGSYEGDEETSVIDISFHHKRGNAENGTKNLQQLREENSLLRKQVKELVRMSETDSRRIKQLTDEMHNKKLQEEKEANDLEAMVQSVEQNLQLMTKRAVKAENNISKLKQEMLKLQGQLEDYKSENERLRLGETAALATMRHNAQVASEYLNKAAQDAEISINSC.

A coiled-coil region spans residues R167–G278.

The protein belongs to the ENTR1 family.

It is found in the cytoplasm. It localises to the early endosome. The protein localises to the endosome. The protein resides in the recycling endosome. Its subcellular location is the midbody. It is found in the cytoskeleton. It localises to the microtubule organizing center. The protein localises to the centrosome. The protein resides in the cilium basal body. Its function is as follows. Endosome-associated protein that plays a role in membrane receptor sorting, cytokinesis and ciliogenesis. The chain is Endosome-associated-trafficking regulator 1 from Danio rerio (Zebrafish).